A 717-amino-acid polypeptide reads, in one-letter code: Ubinuclein-2 (717 aa).

Disordered stretches follow at residues 114 to 136 (KDGS…TEDS), 166 to 308 (LERI…SAKS), and 620 to 717 (ADSS…NLPS). A compositionally biased stretch (acidic residues) spans 118-136 (DGEELDGAPDDDDYDTEDS). Composition is skewed to polar residues over residues 214-246 (QSAS…NGND) and 285-308 (SSKS…SAKS). Over residues 623-632 (SFERSKQQHE) the composition is skewed to basic and acidic residues. The short motif at 634-641 (LKRTSSLS) is the Nuclear localization signal element. A compositionally biased stretch (basic and acidic residues) spans 653 to 665 (KTEPALEETHLPA). The segment covering 675-705 (RQTHLKSKTHKQVQVHPQSKAHKQAQVHPKA) has biased composition (basic residues). Over residues 706 to 717 (KTQTPPDLNLPS) the composition is skewed to polar residues.

It belongs to the ubinuclein family. In terms of assembly, component of the HIRA complex made of UBN1, UBN2, ASF1A, CABIN1 and HIRA. Interacts with HIRA.

It is found in the nucleus. The protein resides in the nucleolus. In terms of biological role, may be required for replication-independent chromatin assembly. In Arabidopsis thaliana (Mouse-ear cress), this protein is Ubinuclein-2.